The chain runs to 414 residues: tRNA(Ile)-lysidine synthase (414 aa).

Residue 17-22 (SGGCDS) participates in ATP binding.

It belongs to the tRNA(Ile)-lysidine synthase family.

The protein resides in the cytoplasm. It catalyses the reaction cytidine(34) in tRNA(Ile2) + L-lysine + ATP = lysidine(34) in tRNA(Ile2) + AMP + diphosphate + H(+). Functionally, ligates lysine onto the cytidine present at position 34 of the AUA codon-specific tRNA(Ile) that contains the anticodon CAU, in an ATP-dependent manner. Cytidine is converted to lysidine, thus changing the amino acid specificity of the tRNA from methionine to isoleucine. The chain is tRNA(Ile)-lysidine synthase from Exiguobacterium sibiricum (strain DSM 17290 / CCUG 55495 / CIP 109462 / JCM 13490 / 255-15).